We begin with the raw amino-acid sequence, 184 residues long: Nucleoside triphosphate pyrophosphatase (184 aa).

D66 functions as the Proton acceptor in the catalytic mechanism.

The protein belongs to the Maf family. A divalent metal cation is required as a cofactor.

It localises to the cytoplasm. The enzyme catalyses a ribonucleoside 5'-triphosphate + H2O = a ribonucleoside 5'-phosphate + diphosphate + H(+). The catalysed reaction is a 2'-deoxyribonucleoside 5'-triphosphate + H2O = a 2'-deoxyribonucleoside 5'-phosphate + diphosphate + H(+). Its function is as follows. Nucleoside triphosphate pyrophosphatase. May have a dual role in cell division arrest and in preventing the incorporation of modified nucleotides into cellular nucleic acids. This chain is Nucleoside triphosphate pyrophosphatase, found in Prochlorococcus marinus (strain MIT 9313).